The sequence spans 225 residues: MSEDHFDEEHEGHGGGGGSRHPMAARFRGYLPVVVDVETGGFNSATDALLEIAAVTIGMDERGFVFPEHTYFFRVEPFVGANIEAAALEFTGIKLDHPLRMAVSEETAMNDIFRGVRKALKANGCKRAVLVGHNASFDLGFVNAAVARMDMKRNPFHPFSSFDTATLAGLAYGQTVLAKACQAAGIDFDGREAHSARYDTEKTAELFCGIVNRWKEMGGWEDFDD.

Positions 1-21 (MSEDHFDEEHEGHGGGGGSRH) are disordered. An Exonuclease domain is found at 33–207 (VVVDVETGGF…YDTEKTAELF (175 aa)). Positions 36, 38, 194, and 199 each coordinate Mg(2+). His-194 acts as the Proton donor/acceptor in catalysis.

It belongs to the RNase T family. As to quaternary structure, homodimer. Requires Mg(2+) as cofactor.

Its function is as follows. Trims short 3' overhangs of a variety of RNA species, leaving a one or two nucleotide 3' overhang. Responsible for the end-turnover of tRNA: specifically removes the terminal AMP residue from uncharged tRNA (tRNA-C-C-A). Also appears to be involved in tRNA biosynthesis. This chain is Ribonuclease T, found in Pseudomonas syringae pv. tomato (strain ATCC BAA-871 / DC3000).